The sequence spans 666 residues: Amyloid beta A4 precursor protein-binding family B member 1-interacting protein (666 aa).

At serine 55 the chain carries Phosphoserine. Residues 122–155 (SQYEDDLPPPPADPVLDLPLPPPPPEPLSQEEEE) form a disordered region. Over residues 129–148 (PPPPADPVLDLPLPPPPPEP) the composition is skewed to pro residues. A Ras-associating domain is found at 176-263 (KKLVVKVHMN…KILFLEKEEK (88 aa)). The 110-residue stretch at 310-419 (VPELEGALYL…WVMGIRIAKY (110 aa)) folds into the PH domain. The interval 448–666 (AAAPAQPSTG…ALQKKRGNVS (219 aa)) is disordered. Residues 453–478 (QPSTGPKTGTTQPNGQIPQATHSVSA) show a composition bias toward polar residues. Basic and acidic residues predominate over residues 483-504 (AQRHAETSKDKKPALGNHHDPA). At serine 526 the chain carries Phosphoserine. Position 528 is a phosphothreonine (threonine 528). Phosphoserine is present on serine 531. 2 stretches are compositionally biased toward pro residues: residues 547–589 (PAPP…PPPS) and 598–631 (LPPP…PVPP).

It belongs to the MRL family. In terms of assembly, interacts, through the N-terminal Pro-rich region, with the WW domain of APBB1. Interacts with RAP1A, PFN1, TLN1, VASP, VCL and ENAH. As to expression, widely expressed with high expression in thymus, spleen, lymph node, bone marrow and peripheral leukocytes.

It is found in the cell membrane. The protein localises to the cell projection. The protein resides in the lamellipodium. Its subcellular location is the cell junction. It localises to the focal adhesion. It is found in the cytoplasm. The protein localises to the cytoskeleton. Appears to function in the signal transduction from Ras activation to actin cytoskeletal remodeling. Suppresses insulin-induced promoter activities through AP1 and SRE. Mediates Rap1-induced adhesion. This is Amyloid beta A4 precursor protein-binding family B member 1-interacting protein (APBB1IP) from Homo sapiens (Human).